The sequence spans 871 residues: Coatomer subunit gamma-2 (871 aa).

Residues 1-11 show a composition bias toward basic and acidic residues; it reads MIKKFDKKDEE. Positions 1–21 are disordered; the sequence is MIKKFDKKDEESGSGSNPFQH. HEAT repeat units follow at residues 64–101, 283–320, 321–355, 356–392, 395–430, and 467–504; these read TEATEAFFAMTRLFQSNDQTLRRMCYLTIKEMATISED, RELAPAVSVLQLFCSSPKPALRYAAVRTLNKVAMKHPS, AVTACNLDLENLITDSNRSIATLAITTLLKTGSES, SVDRLMKQISSFVSEISDEFKVVVVQAISALCQKYPR, SVMMTFLSNMLRDDGGFEYKRAIVDCIISIVEENPE, and PVPSKYIRFIFNRVVLENEAVRAAAVSALAKFGAQNES. Phosphothreonine is present on Thr594.

The protein belongs to the COPG family. As to quaternary structure, oligomeric complex. Binds to CDC42. Interacts with JAGN1. Interacts with TMED10 (via cytoplasmic domain).

The protein resides in the cytoplasm. It is found in the cytosol. Its subcellular location is the golgi apparatus membrane. It localises to the cytoplasmic vesicle. The protein localises to the COPI-coated vesicle membrane. Functionally, the coatomer is a cytosolic protein complex that binds to dilysine motifs and reversibly associates with Golgi non-clathrin-coated vesicles, which further mediate biosynthetic protein transport from the ER, via the Golgi up to the trans Golgi network. Coatomer complex is required for budding from Golgi membranes, and is essential for the retrograde Golgi-to-ER transport of dilysine-tagged proteins. In mammals, the coatomer can only be recruited by membranes associated to ADP-ribosylation factors (ARFs), which are small GTP-binding proteins; the complex also influences the Golgi structural integrity, as well as the processing, activity, and endocytic recycling of LDL receptors. This is Coatomer subunit gamma-2 (COPG2) from Homo sapiens (Human).